A 278-amino-acid polypeptide reads, in one-letter code: Sulfur carrier protein FdhD (278 aa).

C121 (cysteine persulfide intermediate) is an active-site residue. F260–R265 lines the Mo-bis(molybdopterin guanine dinucleotide) pocket.

This sequence belongs to the FdhD family.

It is found in the cytoplasm. Required for formate dehydrogenase (FDH) activity. Acts as a sulfur carrier protein that transfers sulfur from IscS to the molybdenum cofactor prior to its insertion into FDH. This chain is Sulfur carrier protein FdhD, found in Salmonella typhi.